The chain runs to 270 residues: Phosphonoacetaldehyde hydrolase (270 aa).

The active-site Nucleophile is Asp11. Mg(2+) is bound by residues Asp11 and Ala13. Lys53 (schiff-base intermediate with substrate) is an active-site residue. Mg(2+) is bound at residue Asp187.

The protein belongs to the HAD-like hydrolase superfamily. PhnX family. In terms of assembly, homodimer. Requires Mg(2+) as cofactor.

It catalyses the reaction phosphonoacetaldehyde + H2O = acetaldehyde + phosphate + H(+). Involved in phosphonate degradation. The sequence is that of Phosphonoacetaldehyde hydrolase from Salmonella choleraesuis (strain SC-B67).